The chain runs to 304 residues: UDP-N-acetylenolpyruvoylglucosamine reductase (304 aa).

The region spanning 33–198 (RVGGPVDILL…ITATFCFESG (166 aa)) is the FAD-binding PCMH-type domain. Arginine 177 is an active-site residue. Serine 227 serves as the catalytic Proton donor. Glutamate 297 is an active-site residue.

It belongs to the MurB family. Requires FAD as cofactor.

It localises to the cytoplasm. It catalyses the reaction UDP-N-acetyl-alpha-D-muramate + NADP(+) = UDP-N-acetyl-3-O-(1-carboxyvinyl)-alpha-D-glucosamine + NADPH + H(+). It functions in the pathway cell wall biogenesis; peptidoglycan biosynthesis. Cell wall formation. This Clostridium botulinum (strain Eklund 17B / Type B) protein is UDP-N-acetylenolpyruvoylglucosamine reductase.